A 795-amino-acid chain; its full sequence is Phenylalanine--tRNA ligase beta subunit (795 aa).

The 110-residue stretch at 39 to 148 folds into the tRNA-binding domain; sequence AGAFHGVVVG…ADAPLGTDIR (110 aa). A B5 domain is found at 401-476; it reads PARATIALRR…RVYGYNNIPN (76 aa). Mg(2+) is bound by residues D454, D460, E463, and E464. One can recognise an FDX-ACB domain in the interval 701-794; it reads SRFPANRRDI…LKQRFQASLR (94 aa).

This sequence belongs to the phenylalanyl-tRNA synthetase beta subunit family. Type 1 subfamily. In terms of assembly, tetramer of two alpha and two beta subunits. Requires Mg(2+) as cofactor.

It localises to the cytoplasm. The catalysed reaction is tRNA(Phe) + L-phenylalanine + ATP = L-phenylalanyl-tRNA(Phe) + AMP + diphosphate + H(+). The polypeptide is Phenylalanine--tRNA ligase beta subunit (pheT) (Dickeya dadantii (strain 3937) (Erwinia chrysanthemi (strain 3937))).